Consider the following 634-residue polypeptide: Phospholipase B (634 aa).

The N-terminal stretch at 1–19 is a signal peptide; that stretch reads MSIITTAFALSLLATTAFA. The PLA2c domain maps to 46–569; it reads DCPSNVTWIR…DTWCWAGDDN (524 aa). Asn-50, Asn-56, Asn-122, Asn-231, Asn-246, Asn-269, Asn-311, Asn-340, Asn-384, Asn-430, Asn-478, Asn-498, Asn-525, Asn-550, Asn-569, Asn-591, and Asn-603 each carry an N-linked (GlcNAc...) asparagine glycan.

It belongs to the lysophospholipase family. N-glycosylated.

The protein resides in the secreted. It catalyses the reaction a 1-acyl-sn-glycero-3-phosphocholine + H2O = sn-glycerol 3-phosphocholine + a fatty acid + H(+). In terms of biological role, exhibits phospholipase B (PLB), lysophospholipase (LPL) and lysophospholipase/transacylase (LPTA) activities. This is Phospholipase B (PLB1) from Cryptococcus neoformans var. neoformans serotype D (strain JEC21 / ATCC MYA-565) (Filobasidiella neoformans).